The chain runs to 100 residues: Large ribosomal subunit protein bL21 (100 aa).

The protein belongs to the bacterial ribosomal protein bL21 family. In terms of assembly, part of the 50S ribosomal subunit. Contacts protein L20.

Its function is as follows. This protein binds to 23S rRNA in the presence of protein L20. In Mycoplasma mycoides subsp. mycoides SC (strain CCUG 32753 / NCTC 10114 / PG1), this protein is Large ribosomal subunit protein bL21.